A 277-amino-acid chain; its full sequence is Pantothenate synthetase (277 aa).

ATP is bound at residue 26-33; sequence MGNLHEGH. His-33 acts as the Proton donor in catalysis. Residue Gln-57 coordinates (R)-pantoate. Gln-57 is a beta-alanine binding site. 144 to 147 serves as a coordination point for ATP; that stretch reads GKKD. Residue Gln-150 coordinates (R)-pantoate. Residues Val-173 and 181–184 each bind ATP; that span reads LSSR.

This sequence belongs to the pantothenate synthetase family. Homodimer.

It is found in the cytoplasm. The enzyme catalyses (R)-pantoate + beta-alanine + ATP = (R)-pantothenate + AMP + diphosphate + H(+). Its pathway is cofactor biosynthesis; (R)-pantothenate biosynthesis; (R)-pantothenate from (R)-pantoate and beta-alanine: step 1/1. Functionally, catalyzes the condensation of pantoate with beta-alanine in an ATP-dependent reaction via a pantoyl-adenylate intermediate. The sequence is that of Pantothenate synthetase from Paraburkholderia xenovorans (strain LB400).